Here is a 261-residue protein sequence, read N- to C-terminus: 5'-nucleotidase SurE (261 aa).

4 residues coordinate a divalent metal cation: Asp8, Asp9, Ser43, and Asn96.

This sequence belongs to the SurE nucleotidase family. A divalent metal cation serves as cofactor.

The protein resides in the cytoplasm. It carries out the reaction a ribonucleoside 5'-phosphate + H2O = a ribonucleoside + phosphate. Its function is as follows. Nucleotidase that shows phosphatase activity on nucleoside 5'-monophosphates. This chain is 5'-nucleotidase SurE, found in Cereibacter sphaeroides (strain ATCC 17025 / ATH 2.4.3) (Rhodobacter sphaeroides).